A 360-amino-acid polypeptide reads, in one-letter code: Phospho-N-acetylmuramoyl-pentapeptide-transferase (360 aa).

10 helical membrane passes run 27 to 47 (IVSLLTALFLSLWMGPRLIAW), 72 to 92 (PTMGGLMILTSITISVLMWAY), 94 to 114 (SNPYVWCVLFVLVGYGIVGFI), 132 to 152 (WKYFWQSVIALAVAFTMFAVG), 168 to 188 (IMPQLGLWYVLLAYFVIVGTS), 199 to 219 (GLAIMPTVFVAAGLALVAWAT), 235 to 255 (FAGELVVVCTAIVGAGLGFLW), 263 to 283 (VFMGDVGSLALGGALGTIAVL), 288 to 308 (FLLLIMGGVFVVETLSVILQV), and 338 to 358 (VIVRFWIISLMLVLIGLATLK).

The protein belongs to the glycosyltransferase 4 family. MraY subfamily. Requires Mg(2+) as cofactor.

Its subcellular location is the cell inner membrane. It catalyses the reaction UDP-N-acetyl-alpha-D-muramoyl-L-alanyl-gamma-D-glutamyl-meso-2,6-diaminopimeloyl-D-alanyl-D-alanine + di-trans,octa-cis-undecaprenyl phosphate = di-trans,octa-cis-undecaprenyl diphospho-N-acetyl-alpha-D-muramoyl-L-alanyl-D-glutamyl-meso-2,6-diaminopimeloyl-D-alanyl-D-alanine + UMP. Its pathway is cell wall biogenesis; peptidoglycan biosynthesis. Functionally, catalyzes the initial step of the lipid cycle reactions in the biosynthesis of the cell wall peptidoglycan: transfers peptidoglycan precursor phospho-MurNAc-pentapeptide from UDP-MurNAc-pentapeptide onto the lipid carrier undecaprenyl phosphate, yielding undecaprenyl-pyrophosphoryl-MurNAc-pentapeptide, known as lipid I. This Sodalis glossinidius (strain morsitans) protein is Phospho-N-acetylmuramoyl-pentapeptide-transferase.